The sequence spans 257 residues: Aspartate/glutamate leucyltransferase (257 aa).

Belongs to the R-transferase family. Bpt subfamily.

It localises to the cytoplasm. The catalysed reaction is N-terminal L-glutamyl-[protein] + L-leucyl-tRNA(Leu) = N-terminal L-leucyl-L-glutamyl-[protein] + tRNA(Leu) + H(+). It carries out the reaction N-terminal L-aspartyl-[protein] + L-leucyl-tRNA(Leu) = N-terminal L-leucyl-L-aspartyl-[protein] + tRNA(Leu) + H(+). Its function is as follows. Functions in the N-end rule pathway of protein degradation where it conjugates Leu from its aminoacyl-tRNA to the N-termini of proteins containing an N-terminal aspartate or glutamate. The polypeptide is Aspartate/glutamate leucyltransferase (Leptospira interrogans serogroup Icterohaemorrhagiae serovar copenhageni (strain Fiocruz L1-130)).